Reading from the N-terminus, the 843-residue chain is Axin-2 (843 aa).

Positions 1–75 (MSSAMLVTCL…EGRASPDSPL (75 aa)) are disordered. Residues 21-30 (APRPPVPGEE) carry the Tankyrase-binding motif motif. Basic and acidic residues predominate over residues 56-69 (RRNEDGLGEPEGRA). The region spanning 81–200 (SLHSLLGDQD…LTSDIYLEYV (120 aa)) is the RGS domain. The segment at 327–413 (VGSKKQLQRE…REGSELTLNS (87 aa)) is interaction with GSK3B. An interaction with SIAH1 and SIAH2 region spans residues 334 to 393 (QREMHRSVKANGQVSLPHFPRTHRLPKEMTPVEPATFAAELISRLEKLKLELESRHSLEE). 4 disordered regions span residues 396–435 (QQIR…EEDP), 447–494 (LKTP…AASP), 561–674 (APET…RTTP), and 718–748 (ASQQ…EDHK). The interaction with beta-catenin stretch occupies residues 413–476 (SREGAPTQHP…PDHHHHHHSQ (64 aa)). Composition is skewed to low complexity over residues 477–494 (YHSL…AASP) and 588–597 (PGLALPAREG). Positions 727–741 (SATVQTGATPFSNPS) are enriched in polar residues. Residues 761 to 843 (ASELVVTYFF…RILGKVERID (83 aa)) form the DIX domain.

In terms of assembly, interacts with glycogen synthase kinase-3 beta (GSK3B) and beta-catenin. The interaction between axin and beta-catenin occurs via the armadillo repeats contained in beta-catenin. Interacts with SMAD7 and RNF111. Interacts with ANKRD6. Interacts with SIAH1. Interacts with SIAH2. In terms of processing, probably phosphorylated by GSK3B and dephosphorylated by PP2A. ADP-ribosylated by tankyrase TNKS and TNKS2. Poly-ADP-ribosylated protein is recognized by RNF146, followed by ubiquitination and subsequent activation of the Wnt signaling pathway. Post-translationally, ubiquitinated by RNF146 when poly-ADP-ribosylated, leading to its degradation and subsequent activation of the Wnt signaling pathway. Deubiquitinated by USP34, deubiquitinated downstream of beta-catenin stabilization step: deubiquitination is important Wnt signaling to positively regulate beta-catenin (CTNBB1)-mediated transcription. As to expression, expressed in brain and lymphoblast.

It is found in the cytoplasm. Functionally, inhibitor of the Wnt signaling pathway. Down-regulates beta-catenin. Probably facilitate the phosphorylation of beta-catenin and APC by GSK3B. This is Axin-2 (AXIN2) from Homo sapiens (Human).